The sequence spans 110 residues: U12-hexatoxin-Hi1a (110 aa).

The signal sequence occupies residues 1 to 18 (MRVALVFLVLSILAATHG). Intrachain disulfides connect Cys-72–Cys-86, Cys-79–Cys-91, and Cys-85–Cys-104.

In terms of tissue distribution, expressed by the venom gland.

It is found in the secreted. Functionally, probable ion channel inhibitor. This is U12-hexatoxin-Hi1a from Hadronyche infensa (Fraser island funnel-web spider).